The primary structure comprises 785 residues: Probable cationic amino acid transporter (785 aa).

15 helical membrane passes run 58–78 (LVSLGVGSCVGTGMYVVSGLV), 83–103 (AGPGVIVSFIIAAVASILSGV), 119–141 (AYTYSYVTVGEFVAFFIGWNLIL), 187–207 (YPDILALVIGILVTVIVALGV), 216–236 (VLNVINLVVWVFIMIAGLFFV), 251–271 (WSGVMQGAATCFYAFIGFDII), 291–311 (ASLVTCLTAYVSVSVILTLMV), 337–357 (IVAIGSIAGLTVSLLGSLFPM), 360–380 (VIYAMAGDGLLFRFLAHVSTY), 384–404 (PAVACVVSGFLSALLALLVSL), 407–427 (LIEMMSIGTLLAYTLVSVCVL), 568–588 (CVVLLFILIFCFCSLIIFGSG), 596–616 (WAVLLLVVLLLVLTLLVFIII), 628–648 (MAPCVPFVPASAMLVNVYLML), and 655–675 (WIRFGVWCFVGVLIYFGYGMW). The interval 715 to 785 (DQGPFQNWGK…VDDDLDDPLE (71 aa)) is disordered. Positions 727–740 (QQKQPQQEQSEPQS) are enriched in low complexity. The segment covering 775–785 (VVDDDLDDPLE) has biased composition (acidic residues).

The protein belongs to the amino acid-polyamine-organocation (APC) superfamily.

The protein resides in the lysosome membrane. May be involved in arginine transport. This is Probable cationic amino acid transporter (slc7a14a) from Danio rerio (Zebrafish).